We begin with the raw amino-acid sequence, 364 residues long: Aminomethyltransferase (364 aa).

It belongs to the GcvT family. The glycine cleavage system is composed of four proteins: P, T, L and H.

The catalysed reaction is N(6)-[(R)-S(8)-aminomethyldihydrolipoyl]-L-lysyl-[protein] + (6S)-5,6,7,8-tetrahydrofolate = N(6)-[(R)-dihydrolipoyl]-L-lysyl-[protein] + (6R)-5,10-methylene-5,6,7,8-tetrahydrofolate + NH4(+). Functionally, the glycine cleavage system catalyzes the degradation of glycine. This chain is Aminomethyltransferase, found in Shigella boydii serotype 18 (strain CDC 3083-94 / BS512).